Reading from the N-terminus, the 341-residue chain is Biotin synthase (341 aa).

A Radical SAM core domain is found at 39–263 (EQVQLCTLLS…VAVARITMPL (225 aa)). [4Fe-4S] cluster-binding residues include cysteine 54, cysteine 58, and cysteine 61. Residues cysteine 98, cysteine 129, cysteine 189, and arginine 267 each contribute to the [2Fe-2S] cluster site.

Belongs to the radical SAM superfamily. Biotin synthase family. As to quaternary structure, homodimer. It depends on [4Fe-4S] cluster as a cofactor. [2Fe-2S] cluster serves as cofactor.

It carries out the reaction (4R,5S)-dethiobiotin + (sulfur carrier)-SH + 2 reduced [2Fe-2S]-[ferredoxin] + 2 S-adenosyl-L-methionine = (sulfur carrier)-H + biotin + 2 5'-deoxyadenosine + 2 L-methionine + 2 oxidized [2Fe-2S]-[ferredoxin]. It functions in the pathway cofactor biosynthesis; biotin biosynthesis; biotin from 7,8-diaminononanoate: step 2/2. Functionally, catalyzes the conversion of dethiobiotin (DTB) to biotin by the insertion of a sulfur atom into dethiobiotin via a radical-based mechanism. The chain is Biotin synthase from Erythrobacter litoralis (strain HTCC2594).